Consider the following 338-residue polypeptide: Heat shock factor 2-binding protein (338 aa).

The interval Met-1 to Ser-20 is disordered. Positions Glu-12–Gln-126 form a coiled coil. Residues Met-18 to Leu-55 are interaction with BRME1. Residues Ala-87–Val-338 form an interaction with BRCA2 region.

As to quaternary structure, interacts (via C-terminus) with BNC1. Associates with HSF2. The interaction seems to occur between the trimerization domain of HSF2 and the N-terminal hydrophilic region of HSF2BP. Interacts (via N-terminus) with BRME1. Interacts with BRCA2 and BRME1; the interactions are direct and allow the formation of a ternary complex. The complex BRME1:HSF2BP:BRCA2 interacts with SPATA22, MEIOB and RAD51. Post-translationally, sumoylated by UBE2I in response to MEKK1-mediated stimuli. In terms of tissue distribution, expressed in testis and, to a lesser extent, in lung and muscle.

The protein resides in the cytoplasm. It is found in the chromosome. Functionally, meiotic recombination factor component of recombination bridges involved in meiotic double-strand break repair. Modulates the localization of recombinases DMC1:RAD51 to meiotic double-strand break (DSB) sites through the interaction with BRCA2 and its recruitment during meiotic recombination. Indispensable for the DSB repair, homologous synapsis, and crossover formation that are needed for progression past metaphase I, is essential for spermatogenesis and male fertility. Required for proper recombinase recruitment in female meiosis. Inhibits BNC1 transcriptional activity during spermatogenesis, probably by sequestering it in the cytoplasm. May be involved in modulating HSF2 activation in testis. In Mus musculus (Mouse), this protein is Heat shock factor 2-binding protein.